The primary structure comprises 185 residues: Large ribosomal subunit protein uL5 (185 aa).

The protein belongs to the universal ribosomal protein uL5 family. As to quaternary structure, part of the 50S ribosomal subunit; part of the 5S rRNA/L5/L18/L25 subcomplex. Contacts the 5S rRNA and the P site tRNA. Forms a bridge to the 30S subunit in the 70S ribosome.

This is one of the proteins that bind and probably mediate the attachment of the 5S RNA into the large ribosomal subunit, where it forms part of the central protuberance. In the 70S ribosome it contacts protein S13 of the 30S subunit (bridge B1b), connecting the 2 subunits; this bridge is implicated in subunit movement. Contacts the P site tRNA; the 5S rRNA and some of its associated proteins might help stabilize positioning of ribosome-bound tRNAs. In Xanthobacter autotrophicus (strain ATCC BAA-1158 / Py2), this protein is Large ribosomal subunit protein uL5.